Consider the following 903-residue polypeptide: Alanine--tRNA ligase (903 aa).

Positions 581, 585, 693, and 697 each coordinate Zn(2+).

Belongs to the class-II aminoacyl-tRNA synthetase family. Zn(2+) serves as cofactor.

It is found in the cytoplasm. The catalysed reaction is tRNA(Ala) + L-alanine + ATP = L-alanyl-tRNA(Ala) + AMP + diphosphate. Functionally, catalyzes the attachment of alanine to tRNA(Ala) in a two-step reaction: alanine is first activated by ATP to form Ala-AMP and then transferred to the acceptor end of tRNA(Ala). Also edits incorrectly charged Ser-tRNA(Ala) and Gly-tRNA(Ala) via its editing domain. The sequence is that of Alanine--tRNA ligase from Psychrobacter sp. (strain PRwf-1).